The sequence spans 341 residues: MSMYTTAQLLAANEQKFKFDPLFLRLFFRESYPFTTEKVYLSQIPGLVNMALYVSPIVSGEVIRSRGGSTSEFTPGYVKPKHEVNPQMTLRRLPDEDPQNLADPAYRRRRIIMQNMRDEELAIAQVEEMQAVSAVLKGKYTMTGEAFDPVEVDMGRSEENNITQSGGTEWSKRDKSTYDPTDDIEAYALNASGVVNIIVFDPKGWALFRSFKAVKEKLDTRRGSNSELETAVKDLGKAVSYKGMYGDVAIVVYSGQYVENGVKKNFLPDNTMVLGNTQARGLRTYGCIQDADAQREGINASARYPKNWVTTGDPAREFTMIQSAPLMLLADPDEFVSVQLA.

The protein belongs to the lambda phage major capsid protein family. Homomultimer. Interacts with FI protein.

It is found in the virion. It localises to the host cytoplasm. Assembles to form an icosahedral capsid with a T=7 symmetry. The icosahedral capsid is about 60 nm in diameter and composed of 415 major capsid proteins. The assembly is primed by the interaction between capsid assembly protease and portal dodecamer, and major capsid proteins assemble cooperatively to form the procapsid with the help of capsid scaffolding protein. Major capsid protein forms hexons and pentons of the icosahedron. Viral genomic DNA is packaged into the procapsid through the portal vertex. The packaging triggers a dramatic reconfiguration of the capsid shell, expanding from roughly 50nm to 60nm while the capsid thickness decreases. The capsid decoration protein binds the expanded capsid and stabilizes it. The sequence is that of Major capsid protein from Escherichia coli (Bacteriophage lambda).